The chain runs to 492 residues: KAT8 regulatory NSL complex subunit 2 (492 aa).

Residue lysine 78 forms a Glycyl lysine isopeptide (Lys-Gly) (interchain with G-Cter in SUMO2) linkage. The interval 127–182 (LGSQTPESSRSEASRILDEDSWSDGEQEPITVDQTWRGDPDSEADSIDSDQEDPLK) is disordered. Threonine 131 is subject to Phosphothreonine. Basic and acidic residues predominate over residues 135–144 (SRSEASRILD). Residues serine 147, serine 149, serine 168, serine 172, and serine 175 each carry the phosphoserine modification. Positions 167–178 (DSEADSIDSDQE) are enriched in acidic residues. A required for interaction with other NSL complex members region spans residues 308–364 (DVRCSNQSLPMTRHCLTHICQDTNQVLFKCCQGSEEVPCNKPVPVSLSEDPCCPLHF). The disordered stretch occupies residues 455–492 (AGDGCRSQGSRNSEKGSAPLSQSGLATANGKPEPTSIS).

Component of the NSL complex at least composed of KAT8/MOF, KANSL1, KANSL2, KANSL3, MCRS1, PHF20, OGT1/OGT, WDR5 and HCFC1.

The protein resides in the nucleus. Its subcellular location is the mitochondrion. Its function is as follows. Non-catalytic component of the NSL histone acetyltransferase complex, a multiprotein complex that mediates histone H4 acetylation at 'Lys-5'- and 'Lys-8' (H4K5ac and H4K8ac) at transcription start sites and promotes transcription initiation. Required for NSL complex stability and for transcription of intraciliary transport genes in both ciliated and non-ciliated cells by regulating histone H4 acetylation at 'Lys-5'- and 'Lys-12' (H4K5ac and H4K12ac). This is necessary for cilium assembly in ciliated cells and for organization of the microtubule cytoskeleton in non-ciliated cells. Required within the NSL complex to maintain nuclear architecture stability by promoting KAT8-mediated acetylation of lamin LMNA. In Pongo abelii (Sumatran orangutan), this protein is KAT8 regulatory NSL complex subunit 2 (KANSL2).